A 205-amino-acid polypeptide reads, in one-letter code: Probable GTP-binding protein EngB (205 aa).

Residues 27–201 enclose the EngB-type G domain; that stretch reads TGIEIAFAGR…AAKLDFWFSP (175 aa). GTP is bound by residues 35–42, 62–66, 80–83, 147–150, and 180–182; these read GRSNAGKS, GRTQL, DLPG, TKAD, and FSA. Residues serine 42 and threonine 64 each coordinate Mg(2+).

This sequence belongs to the TRAFAC class TrmE-Era-EngA-EngB-Septin-like GTPase superfamily. EngB GTPase family. Mg(2+) is required as a cofactor.

In terms of biological role, necessary for normal cell division and for the maintenance of normal septation. The sequence is that of Probable GTP-binding protein EngB from Haemophilus influenzae (strain PittEE).